Consider the following 139-residue polypeptide: MIIGIGSDLIDIRRIENSLQRFGERFVNRCFTDIEIAKSEGRKNRAASYAKRFAAKEACSKALGTGLAQGVFWKDMGVVNLPGGKPTMQLTGGAAARLQEMLPVGHRAAIHLTITDDFPLAQAFVIIEALPVAPAEGTV.

Residues D8 and E57 each contribute to the Mg(2+) site.

It belongs to the P-Pant transferase superfamily. AcpS family. Mg(2+) serves as cofactor.

It localises to the cytoplasm. It catalyses the reaction apo-[ACP] + CoA = holo-[ACP] + adenosine 3',5'-bisphosphate + H(+). Its function is as follows. Transfers the 4'-phosphopantetheine moiety from coenzyme A to a Ser of acyl-carrier-protein. This chain is Holo-[acyl-carrier-protein] synthase, found in Rhizobium meliloti (strain 1021) (Ensifer meliloti).